The chain runs to 68 residues: Putative membrane protein insertion efficiency factor (68 aa).

It belongs to the UPF0161 family.

The protein localises to the cell membrane. Functionally, could be involved in insertion of integral membrane proteins into the membrane. In Herpetosiphon aurantiacus (strain ATCC 23779 / DSM 785 / 114-95), this protein is Putative membrane protein insertion efficiency factor.